The chain runs to 497 residues: Histidine--tRNA ligase (497 aa).

It belongs to the class-II aminoacyl-tRNA synthetase family. In terms of assembly, homodimer.

It localises to the cytoplasm. The catalysed reaction is tRNA(His) + L-histidine + ATP = L-histidyl-tRNA(His) + AMP + diphosphate + H(+). The sequence is that of Histidine--tRNA ligase from Dinoroseobacter shibae (strain DSM 16493 / NCIMB 14021 / DFL 12).